Here is a 262-residue protein sequence, read N- to C-terminus: Hydroxyethylthiazole kinase (262 aa).

A substrate-binding site is contributed by M50. ATP is bound by residues R125 and T171. G198 contacts substrate.

Belongs to the Thz kinase family. The cofactor is Mg(2+).

The enzyme catalyses 5-(2-hydroxyethyl)-4-methylthiazole + ATP = 4-methyl-5-(2-phosphooxyethyl)-thiazole + ADP + H(+). It functions in the pathway cofactor biosynthesis; thiamine diphosphate biosynthesis; 4-methyl-5-(2-phosphoethyl)-thiazole from 5-(2-hydroxyethyl)-4-methylthiazole: step 1/1. Its function is as follows. Catalyzes the phosphorylation of the hydroxyl group of 4-methyl-5-beta-hydroxyethylthiazole (THZ). In Escherichia fergusonii (strain ATCC 35469 / DSM 13698 / CCUG 18766 / IAM 14443 / JCM 21226 / LMG 7866 / NBRC 102419 / NCTC 12128 / CDC 0568-73), this protein is Hydroxyethylthiazole kinase.